The sequence spans 444 residues: N-succinylarginine dihydrolase (444 aa).

Substrate-binding positions include 19–28 (AGLSFGNVAS), Asn-110, and 137–138 (HR). Residue Glu-174 is part of the active site. Arg-214 is a binding site for substrate. His-250 is a catalytic residue. Substrate-binding residues include Asp-252 and Asn-362. The active-site Nucleophile is Cys-368.

The protein belongs to the succinylarginine dihydrolase family. In terms of assembly, homodimer.

It catalyses the reaction N(2)-succinyl-L-arginine + 2 H2O + 2 H(+) = N(2)-succinyl-L-ornithine + 2 NH4(+) + CO2. It functions in the pathway amino-acid degradation; L-arginine degradation via AST pathway; L-glutamate and succinate from L-arginine: step 2/5. In terms of biological role, catalyzes the hydrolysis of N(2)-succinylarginine into N(2)-succinylornithine, ammonia and CO(2). In Shewanella frigidimarina (strain NCIMB 400), this protein is N-succinylarginine dihydrolase.